The following is a 211-amino-acid chain: MHNEHIEEHFNNRNVTELSSEYYMVDIAPYPTDGWGKFTRTLRRAIRGELFVGLWVVLREMIRFDIHTIQYPLEKMPIGPRYRAVHEMKRLWESDTERCIGCGLCEKICISNCIRIDTKLDENSRKEVTEYSINLGRCIFCGYCAEVCPELAITHGGEYENASDQREHFIMYQDMLTPLDKMKAGTQKEFEGFGAITPHEDERVKKTPLAY.

2 4Fe-4S ferredoxin-type domains span residues 90–119 (RLWE…IDTK) and 129–158 (TEYS…HGGE). Positions 99, 102, 105, 109, 138, 141, 144, and 148 each coordinate [4Fe-4S] cluster.

Belongs to the complex I 23 kDa subunit family. In terms of assembly, NDH-1 is composed of 14 different subunits. Subunits NuoA, H, J, K, L, M, N constitute the membrane sector of the complex. The cofactor is [4Fe-4S] cluster.

Its subcellular location is the cell inner membrane. The catalysed reaction is a quinone + NADH + 5 H(+)(in) = a quinol + NAD(+) + 4 H(+)(out). Functionally, NDH-1 shuttles electrons from NADH, via FMN and iron-sulfur (Fe-S) centers, to quinones in the respiratory chain. The immediate electron acceptor for the enzyme in this species is believed to be ubiquinone. Couples the redox reaction to proton translocation (for every two electrons transferred, four hydrogen ions are translocated across the cytoplasmic membrane), and thus conserves the redox energy in a proton gradient. In Sulfurimonas denitrificans (strain ATCC 33889 / DSM 1251) (Thiomicrospira denitrificans (strain ATCC 33889 / DSM 1251)), this protein is NADH-quinone oxidoreductase subunit I.